The following is a 240-amino-acid chain: Acyl-protein thioesterase 1 (240 aa).

Active-site charge relay system residues include serine 129, aspartate 183, and histidine 219.

This sequence belongs to the AB hydrolase superfamily. AB hydrolase 2 family.

The protein localises to the cytoplasm. It is found in the nucleus. It catalyses the reaction S-hexadecanoyl-L-cysteinyl-[protein] + H2O = L-cysteinyl-[protein] + hexadecanoate + H(+). Functionally, hydrolyzes fatty acids from S-acylated cysteine residues in proteins with a strong preference for palmitoylated G-alpha proteins over other acyl substrates. Mediates the deacylation of G-alpha proteins such as GPA1 in vivo, but has weak or no activity toward palmitoylated Ras proteins. Has weak lysophospholipase activity in vitro; however such activity may not exist in vivo. The protein is Acyl-protein thioesterase 1 of Mycosarcoma maydis (Corn smut fungus).